We begin with the raw amino-acid sequence, 796 residues long: MTKLIAPSEIVGGVPVFKPTYEQFEDFYAYCKAINKYGMKSGVVKVIPPKEWKDKLDLPYSAETLQKIKIKSPIQQHISGNKGLFMVQNVEKNKTYNIIQWKDLSKDYVPPEDPKARRNSRKGSVSKSTKLKLKNFESSFNIDDFEQFRTEYTIDLSDFQNTERLKFLEEYYWKTLNFTTPMYGADTPGSIFPEGLNVWNVAKLPNILDHMETKVPGVNDSYLYAGLWKASFSWHLEDQDLYSINYIHFGAPKQWYSIPQEDRFKFYKFMQEQFPEEAKNCPEFLRHKMFLASPKLLQENGIRCNEIVHHEGEFMITYPYGYHAGFNYGYNLAESVNFALEEWLPIGKKAGKCHCISDSVEIDVKKLAKSWRDNNKESKGTPPLNQLPNPAMPLLHRPTLKEMESSSLRSTSPDVGHFSNFKSKSSGVSSPLLSRMKDYSNIVEPTLEDPTLKLKRISSFQEQPLNKLLKRETSQTAMLTDHEDNIVAMSLTSMANSAASSPRLPLSRLNSSNELSNAQPLLDMTNNTLAFPRPNGPSGLNPLLYISNKNISGISHSAPHSPVNPNISLIKRVKSPNIVTLNISRESSRSPIALNYEARQQHSQQHSFSTPSTVSNLSTSVLGPLSDTNDIKTPHPERPNHKTANRILKKESPVETSKSNLILSKVASTRQEDSFTSRNDDLDKEQGSSPLNSKFAPEEIVLSGKNKIYICKECQRKFSSGHHLTRHKKSVHSGEKPHSCPKCGKRFKRRDHVLQHLNKKIPCISNETTVDAPIMNPTVQPQDGKAAINQQSTPLN.

The JmjN domain maps to 14–55 (VPVFKPTYEQFEDFYAYCKAINKYGMKSGVVKVIPPKEWKDK). One can recognise a JmjC domain in the interval 193–355 (PEGLNVWNVA…IGKKAGKCHC (163 aa)). Position 399 is a phosphothreonine (T399). 6 positions are modified to phosphoserine: S430, S459, S557, S561, S575, and S584. Residues 455 to 471 (KRISSFQEQPLNKLLKR) carry the Bipartite nuclear localization signal motif. Positions 599–692 (RQQHSQQHSF…DKEQGSSPLN (94 aa)) are disordered. Polar residues predominate over residues 601-621 (QHSQQHSFSTPSTVSNLSTSV). A compositionally biased stretch (basic and acidic residues) spans 629-640 (NDIKTPHPERPN). S652 is subject to Phosphoserine. Residues 654–669 (VETSKSNLILSKVAST) show a composition bias toward polar residues. Positions 670–686 (RQEDSFTSRNDDLDKEQ) are enriched in basic and acidic residues. S689 carries the post-translational modification Phosphoserine. The segment at 709-732 (YICKECQRKFSSGHHLTRHKKSVH) adopts a C2H2-type 1 zinc-finger fold. The segment at 738–763 (HSCPKCGKRFKRRDHVLQHLNKKIPC) adopts a C2H2-type 2; atypical zinc-finger fold. Residues 774-796 (IMNPTVQPQDGKAAINQQSTPLN) form a disordered region.

In terms of processing, RAD53-dependent phosphorylated in response to DNA damage.

The protein resides in the nucleus. Its function is as follows. Transcriptional repressor of photolyase PHR1. Recognizes and binds the sequence AG(4) in the upstream repressing sequence of PHR1. Derepresses PHR1 transcription when phosphorylated. This chain is DNA damage-responsive transcriptional repressor RPH1 (RPH1), found in Saccharomyces cerevisiae (strain ATCC 204508 / S288c) (Baker's yeast).